Here is a 213-residue protein sequence, read N- to C-terminus: N-(5'-phosphoribosyl)anthranilate isomerase (213 aa).

The protein belongs to the TrpF family.

It catalyses the reaction N-(5-phospho-beta-D-ribosyl)anthranilate = 1-(2-carboxyphenylamino)-1-deoxy-D-ribulose 5-phosphate. It functions in the pathway amino-acid biosynthesis; L-tryptophan biosynthesis; L-tryptophan from chorismate: step 3/5. The chain is N-(5'-phosphoribosyl)anthranilate isomerase from Rhodopseudomonas palustris (strain ATCC BAA-98 / CGA009).